A 235-amino-acid polypeptide reads, in one-letter code: 2,3-bisphosphoglycerate-dependent phosphoglycerate mutase 1 (235 aa).

Substrate-binding positions include 8-15 (RHGESVAN), 21-22 (TG), R60, 87-90 (ERHY), K98, and 114-115 (RR). Residue H9 is the Tele-phosphohistidine intermediate of the active site. The active-site Proton donor/acceptor is E87.

This sequence belongs to the phosphoglycerate mutase family. BPG-dependent PGAM subfamily.

The catalysed reaction is (2R)-2-phosphoglycerate = (2R)-3-phosphoglycerate. It functions in the pathway carbohydrate degradation; glycolysis; pyruvate from D-glyceraldehyde 3-phosphate: step 3/5. Its function is as follows. Catalyzes the interconversion of 2-phosphoglycerate and 3-phosphoglycerate. The protein is 2,3-bisphosphoglycerate-dependent phosphoglycerate mutase 1 of Latilactobacillus sakei subsp. sakei (strain 23K) (Lactobacillus sakei subsp. sakei).